Consider the following 708-residue polypeptide: Leucine-rich repeat neuronal protein 3 (708 aa).

An N-terminal signal peptide occupies residues 1–22 (MKDMPLQIHVLLGLAITTLVQA). Residues 23–69 (VDKKVDCPQLCTCEIRPWFTPTSIYMEASTVDCNDLGLLTFPARLPA) enclose the LRRNT domain. The Extracellular portion of the chain corresponds to 23-628 (VDKKVDCPQL…KEYEKSNTTT (606 aa)). LRR repeat units lie at residues 70–91 (NTQI…TDFP), 93–114 (NLTG…NVKK), 117–138 (QLLS…CLSE), 141–162 (NLQE…AFIG), 165–186 (NLLR…WFDA), 189–210 (NLEI…NFKP), 213–234 (NLRS…ALVG), 237–258 (NLES…ALQK), 261–282 (NLKF…DFSN), 285–304 (HLKE…DSLA), 310–332 (DLRK…AFFR), and 335–358 (KLES…ESLP). 2 N-linked (GlcNAc...) asparagine glycosylation sites follow: Asn-93 and Asn-103. The N-linked (GlcNAc...) asparagine glycan is linked to Asn-223. An LRRCT domain is found at 368–421 (NPIRCDCVIRWINMNKTNIRFMEPDSLFCVDPPEFQGQNVRQVHFRDMMEICLP). Residue Asn-382 is glycosylated (N-linked (GlcNAc...) asparagine). An Ig-like C2-type domain is found at 421–514 (PLIAPESFPS…DLKSVMIKVD (94 aa)). Residues Cys-444 and Cys-496 are joined by a disulfide bond. N-linked (GlcNAc...) asparagine glycans are attached at residues Asn-522, Asn-579, Asn-608, and Asn-625. The region spanning 523 to 617 (GSLNIKIRDI…NVTTKGLDPD (95 aa)) is the Fibronectin type-III domain. A helical transmembrane segment spans residues 629-649 (LMACLGGLLGIIGVICLISCL). The Cytoplasmic segment spans residues 650–708 (SPEMNCDGGHSYVRNYLQKPTFALGELYPPLINLWEAGKEKSTSLKVKATVIGLPTNMS).

It localises to the membrane. This chain is Leucine-rich repeat neuronal protein 3 (LRRN3), found in Pongo abelii (Sumatran orangutan).